Consider the following 349-residue polypeptide: tRNA pseudouridine synthase D (349 aa).

Phe-27 is a substrate binding site. Asp-80 functions as the Nucleophile in the catalytic mechanism. Asn-129 is a binding site for substrate. Residues 155–303 enclose the TRUD domain; sequence GVPNYFGAQR…VEAARRAMLL (149 aa). Substrate is bound at residue Phe-329.

It belongs to the pseudouridine synthase TruD family.

The enzyme catalyses uridine(13) in tRNA = pseudouridine(13) in tRNA. Responsible for synthesis of pseudouridine from uracil-13 in transfer RNAs. This is tRNA pseudouridine synthase D from Escherichia coli (strain 55989 / EAEC).